Reading from the N-terminus, the 1535-residue chain is CLIP-associating protein 1 (1535 aa).

HEAT repeat units follow at residues 87–124 (AQIGTVLPSLIDRLGDAKDSVREQDQTLLLKIMDQAAN) and 163–200 (LTLSKIVPHICNLLGDPNSQVRDAAINSLVEIYRHVGE). The disordered stretch occupies residues 237–290 (NEKNFDDEDSVDGNRPSSASSSSSKAPSSSRRNVNLGTTRRLMSSSLGSKSSAA). Residue serine 246 is modified to Phosphoserine. Residues 252–266 (PSSASSSSSKAPSSS) show a composition bias toward low complexity. The segment covering 267-279 (RRNVNLGTTRRLM) has biased composition (polar residues). Residues 280 to 290 (SSSLGSKSSAA) are compositionally biased toward low complexity. 2 HEAT repeats span residues 405 to 440 (HGAEAIMPTIFNLIPNSAKIMATSGVVAVRLIIRHT) and 441 to 477 (HIPRLIPVITSNCTSKSVAVRRRCFEFLDLLLQEWQT). Disordered stretches follow at residues 543-600 (SDSI…RSRS) and 612-782 (SKVS…GRIP). Phosphoserine is present on residues serine 545, serine 548, serine 558, serine 559, and serine 568. Positions 548-567 (SLPQSDRSSSSSQESLNRPL) are enriched in low complexity. A compositionally biased stretch (low complexity) spans 579-594 (SRGSTVSTKSVSTTGS). Serine 600 carries the phosphoserine modification. The span at 612–633 (SKVSSSSGSPAFSSAAALPPGS) shows a compositional bias: low complexity. Residues serine 636, serine 646, serine 647, and serine 649 each carry the phosphoserine modification. Over residues 645–658 (QSSGSTTNVASTPD) the composition is skewed to polar residues. Threonine 656 carries the post-translational modification Phosphothreonine. The interaction with microtubules, MAPRE1 and MAPRE3 stretch occupies residues 662 to 782 (RSRAKVVSQS…FGLGQSGRIP (121 aa)). Low complexity predominate over residues 673 to 695 (RSRSANPAGAGSRSSSPGKLLGS). A phosphoserine mark is found at serine 684, serine 688, serine 695, and serine 702. Threonine 708 carries the post-translational modification Phosphothreonine. Serine 711 is modified (phosphoserine). Residues 721–730 (QGCSRETSPN) show a composition bias toward polar residues. Serine 784, serine 794, and serine 820 each carry phosphoserine. The stretch at 971-1008 (QQFNILMRFIVDQTQTPNLKVKVAILKYIESLARQMDP) is one HEAT 5 repeat. The interval 1078–1157 (LKNSSNTGVG…APSHKTLRRS (80 aa)) is disordered. Polar residues predominate over residues 1079 to 1094 (KNSSNTGVGSPSNTIG). Residue serine 1088 is modified to Phosphoserine. Threonine 1092 and threonine 1096 each carry phosphothreonine. The segment covering 1103-1112 (SRTSPLTSPT) has biased composition (low complexity). A phosphoserine mark is found at serine 1110, phenylalanine 1139, and serine 1193. The segment covering 1200 to 1213 (PIKRDGKKDCDIVS) has biased composition (basic and acidic residues). Disordered stretches follow at residues 1200 to 1233 (PIKRDGKKDCDIVSRDGGAASPATEGRGGSEIEG) and 1245 to 1266 (LNTQPPRAFPGPRAREYNPYPY). Serine 1220 carries the post-translational modification Phosphoserine. Residues 1251–1535 (RAFPGPRARE…SSSSDVSTHS (285 aa)) are interaction with CLIP2 and RSN. Residues 1251-1535 (RAFPGPRARE…SSSSDVSTHS (285 aa)) form an interaction with PHLDB2 region. The tract at residues 1253 to 1535 (FPGPRAREYN…SSSSDVSTHS (283 aa)) is localization to kinetochores. Residues 1296 to 1327 (DHSDLVADLLKELSNHNERVEERKGALLELLK) are a coiled coil. 2 HEAT repeats span residues 1339–1376 (EHFKTILLLLLETLGDKDHSIRALALRVLREILRNQPA) and 1457–1494 (QLLVDIIPGLLQGYDNTESSVRKASVFCLVAIYSVIGE).

This sequence belongs to the CLASP family. As to quaternary structure, interacts with ERC1, MAPRE1, MAPRE3, microtubules, and PHLDB2. The interaction with ERC1 may be mediated by PHLDB2. Interacts with GCC2; recruits CLASP1 to Golgi membranes. Interacts with CLIP2 and RSN. Interacts with MACF1. Interacts with mtcl2 and MTCL1. Highly expressed in brain and heart and at lower levels in kidney, lung, skeletal muscle and testis.

It localises to the cytoplasm. It is found in the cytoskeleton. The protein localises to the microtubule organizing center. The protein resides in the centrosome. Its subcellular location is the chromosome. It localises to the centromere. It is found in the kinetochore. The protein localises to the spindle. The protein resides in the golgi apparatus. Its subcellular location is the trans-Golgi network. Microtubule plus-end tracking protein that promotes the stabilization of dynamic microtubules. Involved in the nucleation of noncentrosomal microtubules originating from the trans-Golgi network (TGN). Required for the polarization of the cytoplasmic microtubule arrays in migrating cells towards the leading edge of the cell. May act at the cell cortex to enhance the frequency of rescue of depolymerizing microtubules by attaching their plus-ends to cortical platforms composed of ERC1 and PHLDB2. This cortical microtubule stabilizing activity is regulated at least in part by phosphatidylinositol 3-kinase signaling. Also performs a similar stabilizing function at the kinetochore which is essential for the bipolar alignment of chromosomes on the mitotic spindle. This Mus musculus (Mouse) protein is CLIP-associating protein 1 (Clasp1).